The following is a 370-amino-acid chain: Selenide, water dikinase 2 (370 aa).

Residue selenocysteine 24 is part of the active site. A non-standard amino acid (selenocysteine) is located at residue selenocysteine 24. Residues lysine 27, 55-57, aspartate 76, and aspartate 99 each bind ATP; that span reads GMD. Residue aspartate 57 coordinates Mg(2+). Residues aspartate 99 and aspartate 258 each coordinate Mg(2+).

Belongs to the selenophosphate synthase 1 family. Class I subfamily. Homodimer. Mg(2+) is required as a cofactor. First expressed in the midgut anlagen with subsequent expression in a variety of tissues including the gut and nervous system.

It carries out the reaction hydrogenselenide + ATP + H2O = selenophosphate + AMP + phosphate + 2 H(+). Its function is as follows. Synthesizes selenophosphate from selenide and ATP. The sequence is that of Selenide, water dikinase 2 (Sps2) from Drosophila melanogaster (Fruit fly).